A 473-amino-acid chain; its full sequence is Vasculin (473 aa).

5 disordered regions span residues 1-26 (MAQH…SLNF), 44-163 (RRRH…EYPP), 196-240 (SQPV…SFPH), 258-286 (NFSP…QQPR), and 305-342 (LKRD…QERD). Ser49 is modified (phosphoserine). Arg87 is subject to Omega-N-methylarginine. Low complexity predominate over residues 93 to 107 (GSSRSRSSIFHSGKS). Residues 119 to 133 (ETGRKDDKRERKQFE) show a composition bias toward basic and acidic residues. 4 positions are modified to phosphoserine: Ser274, Ser276, Ser322, and Ser381. Positions 305 to 329 (LKRDRVEEEHEDESHVGSEKDDDSF) are enriched in basic and acidic residues. The disordered stretch occupies residues 444–473 (GPWKNSTFKPTIENDDTETSSSDTSDDDDV). Residues 456 to 473 (ENDDTETSSSDTSDDDDV) show a composition bias toward acidic residues.

The protein belongs to the vasculin family. Interacts with GTF2B, GTF2F2, RNA polymerase II and TBP.

Its subcellular location is the nucleus. In terms of biological role, functions as a GC-rich promoter-specific transactivating transcription factor. This is Vasculin (GPBP1) from Bos taurus (Bovine).